Reading from the N-terminus, the 250-residue chain is Triosephosphate isomerase (250 aa).

9–11 (NWK) contributes to the substrate binding site. Histidine 94 acts as the Electrophile in catalysis. Glutamate 166 functions as the Proton acceptor in the catalytic mechanism. Substrate-binding positions include glycine 172, serine 211, and 232-233 (GG).

It belongs to the triosephosphate isomerase family. In terms of assembly, homodimer.

The protein localises to the cytoplasm. It catalyses the reaction D-glyceraldehyde 3-phosphate = dihydroxyacetone phosphate. It functions in the pathway carbohydrate biosynthesis; gluconeogenesis. The protein operates within carbohydrate degradation; glycolysis; D-glyceraldehyde 3-phosphate from glycerone phosphate: step 1/1. Involved in the gluconeogenesis. Catalyzes stereospecifically the conversion of dihydroxyacetone phosphate (DHAP) to D-glyceraldehyde-3-phosphate (G3P). In Methylococcus capsulatus (strain ATCC 33009 / NCIMB 11132 / Bath), this protein is Triosephosphate isomerase.